Here is a 202-residue protein sequence, read N- to C-terminus: ATP-dependent Clp protease proteolytic subunit (202 aa).

Serine 101 functions as the Nucleophile in the catalytic mechanism. Histidine 126 is a catalytic residue.

Belongs to the peptidase S14 family. Component of the chloroplastic Clp protease core complex.

It is found in the plastid. Its subcellular location is the chloroplast stroma. The catalysed reaction is Hydrolysis of proteins to small peptides in the presence of ATP and magnesium. alpha-casein is the usual test substrate. In the absence of ATP, only oligopeptides shorter than five residues are hydrolyzed (such as succinyl-Leu-Tyr-|-NHMec, and Leu-Tyr-Leu-|-Tyr-Trp, in which cleavage of the -Tyr-|-Leu- and -Tyr-|-Trp bonds also occurs).. Cleaves peptides in various proteins in a process that requires ATP hydrolysis. Has a chymotrypsin-like activity. Plays a major role in the degradation of misfolded proteins. This chain is ATP-dependent Clp protease proteolytic subunit, found in Nuphar advena (Common spatterdock).